Reading from the N-terminus, the 619-residue chain is 1-deoxy-D-xylulose-5-phosphate synthase (619 aa).

Thiamine diphosphate contacts are provided by residues His63 and 104 to 106 (GHS). Position 136 (Asp136) interacts with Mg(2+). Thiamine diphosphate contacts are provided by residues 137 to 138 (GS), Asn165, Tyr272, and Glu353. Asn165 provides a ligand contact to Mg(2+).

It belongs to the transketolase family. DXPS subfamily. Homodimer. Requires Mg(2+) as cofactor. Thiamine diphosphate serves as cofactor.

The catalysed reaction is D-glyceraldehyde 3-phosphate + pyruvate + H(+) = 1-deoxy-D-xylulose 5-phosphate + CO2. It functions in the pathway metabolic intermediate biosynthesis; 1-deoxy-D-xylulose 5-phosphate biosynthesis; 1-deoxy-D-xylulose 5-phosphate from D-glyceraldehyde 3-phosphate and pyruvate: step 1/1. Its function is as follows. Catalyzes the acyloin condensation reaction between C atoms 2 and 3 of pyruvate and glyceraldehyde 3-phosphate to yield 1-deoxy-D-xylulose-5-phosphate (DXP). The chain is 1-deoxy-D-xylulose-5-phosphate synthase from Wolinella succinogenes (strain ATCC 29543 / DSM 1740 / CCUG 13145 / JCM 31913 / LMG 7466 / NCTC 11488 / FDC 602W) (Vibrio succinogenes).